The primary structure comprises 153 residues: Protein Smg homolog (153 aa).

This sequence belongs to the Smg family.

This Neisseria meningitidis serogroup B (strain ATCC BAA-335 / MC58) protein is Protein Smg homolog.